The primary structure comprises 204 residues: Methylthioribulose-1-phosphate dehydratase (204 aa).

Positions 94 and 96 each coordinate Zn(2+).

Belongs to the aldolase class II family. MtnB subfamily. The cofactor is Zn(2+).

The catalysed reaction is 5-(methylsulfanyl)-D-ribulose 1-phosphate = 5-methylsulfanyl-2,3-dioxopentyl phosphate + H2O. The protein operates within amino-acid biosynthesis; L-methionine biosynthesis via salvage pathway; L-methionine from S-methyl-5-thio-alpha-D-ribose 1-phosphate: step 2/6. Functionally, catalyzes the dehydration of methylthioribulose-1-phosphate (MTRu-1-P) into 2,3-diketo-5-methylthiopentyl-1-phosphate (DK-MTP-1-P). The polypeptide is Methylthioribulose-1-phosphate dehydratase (Cronobacter sakazakii (strain ATCC BAA-894) (Enterobacter sakazakii)).